The chain runs to 153 residues: Superoxide dismutase [Cu-Zn] (153 aa).

The Cu cation site is built by His45, His47, and His62. Cys56 and Cys145 are disulfide-bonded. His62, His70, His79, and Asp82 together coordinate Zn(2+). His119 is a Cu cation binding site.

The protein belongs to the Cu-Zn superoxide dismutase family. Homodimer. The cofactor is Cu cation. Zn(2+) is required as a cofactor.

Its subcellular location is the cytoplasm. It carries out the reaction 2 superoxide + 2 H(+) = H2O2 + O2. Destroys radicals which are normally produced within the cells and which are toxic to biological systems. The protein is Superoxide dismutase [Cu-Zn] of Drosophila willistoni (Fruit fly).